The chain runs to 372 residues: Glycerophosphodiester phosphodiesterase GDPD6 (372 aa).

The N-terminal stretch at 1–21 (MAFKYLLPLLLLSLLVANCAS) is a signal peptide. A disordered region spans residues 32–58 (KHATKKPLQTSRPYNLAHRGSNGELPE). A GP-PDE domain is found at 44 to 362 (PYNLAHRGSN…DFTGSLHNYQ (319 aa)). 3 N-linked (GlcNAc...) asparagine glycosylation sites follow: N120, N239, and N260.

The protein belongs to the glycerophosphoryl diester phosphodiesterase family. Expressed in flowers and siliques.

The catalysed reaction is a sn-glycero-3-phosphodiester + H2O = an alcohol + sn-glycerol 3-phosphate + H(+). The chain is Glycerophosphodiester phosphodiesterase GDPD6 from Arabidopsis thaliana (Mouse-ear cress).